A 174-amino-acid chain; its full sequence is Myelin basic protein (174 aa).

The interval 1-86 is disordered; the sequence is MASQKRSSFR…GRPGDDNPVV (86 aa). Ala2 carries the N-acetylalanine; in forms C1, C2 and C3 modification. Deamidated glutamine; in forms C1 and C2; partial is present on Gln4. Phosphoserine; in forms C2 and C3 is present on Ser8. The residue at position 19 (Ser19) is a Phosphoserine; in form C2. The span at 22–35 shows a compositional bias: basic and acidic residues; that stretch reads DHARHGSPRHRDSG. Arg25 is modified (citrulline; in forms C1, C2 and C3). Ser34 is subject to Phosphoserine; in forms C2 and C3. Arg42 bears the Citrulline; in form C3 mark. Residues 45 to 61 show a composition bias toward basic and acidic residues; that stretch reads GGDRHVPRRGFGKDIHA. Ser65 bears the Phosphoserine; in forms C2 and C3 mark. The residue at position 72 (Gln72) is a Deamidated glutamine; in forms C1, C2 and C3; partial. Ser74 bears the Phosphoserine; in form C2 mark. Asn91 carries the post-translational modification Deamidated asparagine; in forms C1, C2 and C3; partial. Thr97 is modified (phosphothreonine; in forms C2 and C3). Gln102 bears the Deamidated glutamine; in forms C1, C2 and C3; partial mark. Residue Gln102 is modified to Deamidated glutamine; in form C1. Residue Arg106 is modified to Omega-N-methylarginine; in forms C1, C2 and C3; alternate. Arg106 carries the post-translational modification Symmetric dimethylarginine; in forms C1, C2 and C3; alternate. A phosphoserine; in forms C2 and C3 mark is found at Ser114 and Ser142. Positions 126–174 are disordered; that stretch reads SGKFYEHKSAHKGHKGSYHEGQGTLSKIFKLGGSGSRPGSRSGSPVARR. Gln147 bears the Deamidated glutamine; in forms C1, C2 and C3; partial mark. Residues 162–174 show a composition bias toward low complexity; the sequence is RPGSRSGSPVARR. Residue Ser165 is modified to Phosphoserine; in forms C2 and C3. Arg166 is subject to Citrulline; in forms C2 and C3. Phosphoserine; in forms C2 and C3 is present on Ser169.

The protein belongs to the myelin basic protein family. Homodimer. Several charge isomers are produced as a result of optional post-translational modifications, such as phosphorylation of serine or threonine residues, deamidation of glutamine or asparagine residues, citrullination and methylation of arginine residues. Chicken MBP contains 4 charge components denoted as C1, C2, C3 and C8. C1 lacks any phosphorylation sites, whereas C2 and C3 contain respectively 10 and 8 phosphorylation sites and arginine residues modified to citrulline. All three charge components contain deamidated glutamines and asparagine, and a methylated arginine.

It is found in the myelin membrane. Its function is as follows. Is, with PLP, the most abundant protein component of the myelin membrane in the CNS. Has a role in both the formation and stabilization of this compact multilayer arrangement of bilayers. Each splice variant and charge isomer may have a specialized function in the assembly of an optimized, biochemically functional myelin membrane. In Gallus gallus (Chicken), this protein is Myelin basic protein (MBP).